A 100-amino-acid polypeptide reads, in one-letter code: Small ribosomal subunit protein uS14c (100 aa).

It belongs to the universal ribosomal protein uS14 family. In terms of assembly, part of the 30S ribosomal subunit.

The protein resides in the plastid. Its subcellular location is the chloroplast. Functionally, binds 16S rRNA, required for the assembly of 30S particles. The sequence is that of Small ribosomal subunit protein uS14c from Cyanidium caldarium (Red alga).